We begin with the raw amino-acid sequence, 332 residues long: GTP 3',8-cyclase (332 aa).

The region spanning 9–220 is the Radical SAM core domain; sequence GYNRRVDYLR…TQVRERIAER (212 aa). Position 18 (arginine 18) interacts with GTP. The [4Fe-4S] cluster site is built by cysteine 25 and cysteine 29. S-adenosyl-L-methionine is bound at residue tyrosine 31. Position 32 (cysteine 32) interacts with [4Fe-4S] cluster. Arginine 67 serves as a coordination point for GTP. S-adenosyl-L-methionine is bound at residue glycine 71. A GTP-binding site is contributed by threonine 98. Position 122 (serine 122) interacts with S-adenosyl-L-methionine. Lysine 159 contributes to the GTP binding site. Position 193 (methionine 193) interacts with S-adenosyl-L-methionine. The [4Fe-4S] cluster site is built by cysteine 258 and cysteine 261. 263–265 serves as a coordination point for GTP; it reads RVR. Residue cysteine 275 coordinates [4Fe-4S] cluster.

This sequence belongs to the radical SAM superfamily. MoaA family. Monomer and homodimer. It depends on [4Fe-4S] cluster as a cofactor.

It catalyses the reaction GTP + AH2 + S-adenosyl-L-methionine = (8S)-3',8-cyclo-7,8-dihydroguanosine 5'-triphosphate + 5'-deoxyadenosine + L-methionine + A + H(+). It functions in the pathway cofactor biosynthesis; molybdopterin biosynthesis. Its function is as follows. Catalyzes the cyclization of GTP to (8S)-3',8-cyclo-7,8-dihydroguanosine 5'-triphosphate. The protein is GTP 3',8-cyclase of Pseudomonas fluorescens (strain Pf0-1).